The primary structure comprises 491 residues: UDP-N-acetylmuramate--L-alanine ligase (491 aa).

126–132 (GTHGKTT) provides a ligand contact to ATP.

This sequence belongs to the MurCDEF family.

The protein resides in the cytoplasm. It carries out the reaction UDP-N-acetyl-alpha-D-muramate + L-alanine + ATP = UDP-N-acetyl-alpha-D-muramoyl-L-alanine + ADP + phosphate + H(+). It functions in the pathway cell wall biogenesis; peptidoglycan biosynthesis. Cell wall formation. This chain is UDP-N-acetylmuramate--L-alanine ligase, found in Yersinia enterocolitica serotype O:8 / biotype 1B (strain NCTC 13174 / 8081).